We begin with the raw amino-acid sequence, 98 residues long: NADH-ubiquinone oxidoreductase chain 4L (98 aa).

3 helical membrane passes run 2–22 (PSISININLAFATALLGMLMF), 29–49 (SLLCLEGMMLSMFILSTLTIL), and 61–81 (ILLLVFAACEAAIGLALLVMV).

Belongs to the complex I subunit 4L family. As to quaternary structure, core subunit of respiratory chain NADH dehydrogenase (Complex I) which is composed of 45 different subunits.

The protein localises to the mitochondrion inner membrane. It carries out the reaction a ubiquinone + NADH + 5 H(+)(in) = a ubiquinol + NAD(+) + 4 H(+)(out). Core subunit of the mitochondrial membrane respiratory chain NADH dehydrogenase (Complex I) which catalyzes electron transfer from NADH through the respiratory chain, using ubiquinone as an electron acceptor. Part of the enzyme membrane arm which is embedded in the lipid bilayer and involved in proton translocation. The polypeptide is NADH-ubiquinone oxidoreductase chain 4L (MT-ND4L) (Microcebus simmonsi (Simmons's mouse lemur)).